The following is a 262-amino-acid chain: Nurim (262 aa).

At 1 to 4 (MAPA) the chain is on the nuclear side. The helical transmembrane segment at 5-28 (LLLVPAALASFVLAFGTGVEFVRF) threads the bilayer. Residues 29–58 (TSLRPLLGGIPESGGPDARHGWLAALQDRS) are Perinuclear space-facing. Residues 59–80 (ILASLAWDLCLLLLFVVQHSLM) traverse the membrane as a helical segment. Residues 81–97 (ATEAVKAWTSRYFGVLQ) are Nuclear-facing. A helical membrane pass occupies residues 98 to 114 (RSLYVACTALALQLVMR). The Perinuclear space segment spans residues 115–133 (YWEATPRGPVLWEARAEPW). The chain crosses the membrane as a helical span at residues 134–164 (ATWVPLLCFVLHVVSWLLIFSILLVFDYAEL). The Nuclear portion of the chain corresponds to 165-191 (MGLKQVYYHVLGLGEPLSLKSPRALRL). A helical membrane pass occupies residues 192–210 (FSHLRHPVCVELLTVLWVV). Topologically, residues 211-216 (PTLGTD) are perinuclear space. The helical transmembrane segment at 217-234 (RLLLALLFTLYLGLAHGL) threads the bilayer. Topologically, residues 235–262 (DQQDLRYLRSQLQRKLQLLSRPQDGEAE) are nuclear.

Belongs to the nurim family.

The protein localises to the nucleus inner membrane. The chain is Nurim (Nrm) from Rattus norvegicus (Rat).